Consider the following 1626-residue polypeptide: RNA2 polyprotein (1626 aa).

2 disordered regions span residues 84–107 and 1042–1066; these read KHSKGPASPNGSVTTKRSNSARAA and GRSNTTRSFRMPTMDLPRSTGRDAP. Polar residues predominate over residues 92–104; sequence PNGSVTTKRSNSA.

It belongs to the nepoviruses RNA2 polyprotein family. Specific enzymatic cleavages in vivo by the P1 encoded 3C-like protease yield mature proteins.

It localises to the host cell junction. The protein localises to the host plasmodesma. It is found in the virion. Functionally, implicated in RNA2 replication. Could also be required for nematode transmission of the virus. Transports viral genome to neighboring plant cells directly through plasmosdesmata, without any budding. The movement protein allows efficient cell to cell propagation, by bypassing the host cell wall barrier. Acts by forming a tubular structure at the host plasmodesmata, enlarging it enough to allow free passage of virion capsids. In Blackcurrant reversion association virus (BRAV), this protein is RNA2 polyprotein.